The following is a 543-amino-acid chain: MDISKDLICIGFEGTAEKTGVGIINSKGEVLFNKTIIYTPPVQGIHPREAADHHAETFVKLLKEALAVVPLEKIDLVSFSLGPGLGPSLRVTATTARALSLSINKPIIGVNHCISHVEIGKLKTDAVDPLTLYVSGGNTQVLAYTGKKYRVIGETLDIAIGNCLDQFARHCNMPHPGGVYVEKYAKNGNKFIKLPYTVKGMDISLSGLLTAAMKKYDSKERIEDVCHSLQETSFSMLTEITERALAHTNKAEVMLVGGVAANNRLKEMLNVMCAEQNVDFYVPEREFCGDNGAMIAWLGILQYLNGKRMDLNDTKPISNYRSDMVEVNWIPEENNENIKSRIIPEHLIGKGAEADISKGRYLEFESITKERVKKGYRILELDELIRMRRTVKEARFLTAIKELGIYAPSIFDIDKERKKITMSYIHGKIAKEKIEEGNLDFCEDLGKIIGKMHVGGIVHNDLTTSNFIVSDNTFVIDFGLGKYSDLVEDKAIDLIVLKKSIMSIHYDKFDLVWNKIVEGYKTYEMSESVLECMKEVEKRARYL.

The segment at 1–329 (MDISKDLICI…YRSDMVEVNW (329 aa)) is kae1. Residues His-112, His-116, and Tyr-133 each coordinate Fe cation. Residues 133–137 (YVSGG), Asp-165, Gly-178, Glu-182, and Asn-262 each bind L-threonylcarbamoyladenylate. Asp-290 provides a ligand contact to Fe cation. The Protein kinase domain occupies 342 to 543 (IIPEHLIGKG…KEVEKRARYL (202 aa)). ATP-binding positions include 348–356 (IGKGAEADI) and Lys-369. The active-site Proton acceptor; for kinase activity is Asp-461.

The protein in the N-terminal section; belongs to the KAE1 / TsaD family. It in the C-terminal section; belongs to the protein kinase superfamily. Tyr protein kinase family. BUD32 subfamily. In terms of assembly, component of the KEOPS complex that consists of Kae1, Bud32, Cgi121 and Pcc1; the whole complex dimerizes. The cofactor is Fe(2+).

The protein localises to the cytoplasm. It carries out the reaction L-seryl-[protein] + ATP = O-phospho-L-seryl-[protein] + ADP + H(+). It catalyses the reaction L-threonyl-[protein] + ATP = O-phospho-L-threonyl-[protein] + ADP + H(+). The catalysed reaction is L-threonylcarbamoyladenylate + adenosine(37) in tRNA = N(6)-L-threonylcarbamoyladenosine(37) in tRNA + AMP + H(+). Required for the formation of a threonylcarbamoyl group on adenosine at position 37 (t(6)A37) in tRNAs that read codons beginning with adenine. Is a component of the KEOPS complex that is probably involved in the transfer of the threonylcarbamoyl moiety of threonylcarbamoyl-AMP (TC-AMP) to the N6 group of A37. The Kae1 domain likely plays a direct catalytic role in this reaction. The Bud32 domain probably displays kinase activity that regulates Kae1 function. The sequence is that of Probable bifunctional tRNA threonylcarbamoyladenosine biosynthesis protein from Methanococcus maripaludis (strain C6 / ATCC BAA-1332).